The primary structure comprises 147 residues: Hemoglobin subunit beta (147 aa).

Position 2 is an N-acetylvaline (Val-2). Residues 3-147 (HLSGSEKTAV…VSHALAHKYH (145 aa)) enclose the Globin domain. The residue at position 13 (Thr-13) is a Phosphothreonine. Residue Ser-45 is modified to Phosphoserine. An N6-acetyllysine modification is found at Lys-60. His-64 contributes to the heme b binding site. N6-acetyllysine is present on Lys-83. His-93 contacts heme b. An S-nitrosocysteine modification is found at Cys-94. Lys-145 is subject to N6-acetyllysine.

The protein belongs to the globin family. In terms of assembly, heterotetramer of two alpha chains and two beta chains. In terms of tissue distribution, red blood cells.

Involved in oxygen transport from the lung to the various peripheral tissues. The sequence is that of Hemoglobin subunit beta (HBB) from Tachyglossus aculeatus aculeatus (Southeast Australian short-beaked echidna).